A 377-amino-acid chain; its full sequence is Dihydroorotase, mitochondrial (377 aa).

5 residues coordinate Zn(2+): His-44, His-46, Lys-130, His-168, and His-206. At Lys-130 the chain carries N6-carboxylysine. Ser-223 is subject to Phosphoserine. Asp-280 serves as a coordination point for Zn(2+).

Belongs to the metallo-dependent hydrolases superfamily. DHOase family. Class II DHOase subfamily. Requires Zn(2+) as cofactor.

Its subcellular location is the mitochondrion. The catalysed reaction is (S)-dihydroorotate + H2O = N-carbamoyl-L-aspartate + H(+). Its pathway is pyrimidine metabolism; UMP biosynthesis via de novo pathway; (S)-dihydroorotate from bicarbonate: step 3/3. The protein is Dihydroorotase, mitochondrial (PYR4) of Arabidopsis thaliana (Mouse-ear cress).